A 54-amino-acid polypeptide reads, in one-letter code: Ovomucoid (54 aa).

The 51-residue stretch at 4–54 (VNCSDYPKPVCSLLYMPLCGSDNKTYGNKCNFCNAVADSNGTLTLSHFGKC) folds into the Kazal-like domain. 3 disulfides stabilise this stretch: Cys6-Cys36, Cys14-Cys33, and Cys22-Cys54. A glycan (N-linked (GlcNAc...) asparagine) is linked at Asn43.

Its subcellular location is the secreted. The sequence is that of Ovomucoid from Geococcyx californianus (Greater roadrunner).